Reading from the N-terminus, the 113-residue chain is Ribonuclease P protein component (113 aa).

Belongs to the RnpA family. In terms of assembly, consists of a catalytic RNA component (M1 or rnpB) and a protein subunit.

The catalysed reaction is Endonucleolytic cleavage of RNA, removing 5'-extranucleotides from tRNA precursor.. Its function is as follows. RNaseP catalyzes the removal of the 5'-leader sequence from pre-tRNA to produce the mature 5'-terminus. It can also cleave other RNA substrates such as 4.5S RNA. The protein component plays an auxiliary but essential role in vivo by binding to the 5'-leader sequence and broadening the substrate specificity of the ribozyme. In Clostridium novyi (strain NT), this protein is Ribonuclease P protein component.